A 267-amino-acid polypeptide reads, in one-letter code: PF03932 family protein CutC (267 aa).

It belongs to the CutC family.

The protein resides in the cytoplasm. The polypeptide is PF03932 family protein CutC (Xylella fastidiosa (strain Temecula1 / ATCC 700964)).